Consider the following 85-residue polypeptide: Protein AC4 (85 aa).

Glycine 2 carries N-myristoyl glycine; by host lipidation. The tract at residues 44-63 is disordered; the sequence is RAPMSNPTSRKTGTVSNGDC. Over residues 46–62 the composition is skewed to polar residues; that stretch reads PMSNPTSRKTGTVSNGD.

This sequence belongs to the geminiviridae protein AC4/C4 family.

Its subcellular location is the host cell membrane. Functionally, pathogenicity determinant. May act as a suppressor of RNA-mediated gene silencing, also known as post-transcriptional gene silencing (PTGS), a mechanism of plant viral defense that limits the accumulation of viral RNAs. The sequence is that of Protein AC4 from Potato yellow mosaic virus (isolate Venezuela) (PYMV).